We begin with the raw amino-acid sequence, 268 residues long: tRNA pseudouridine synthase A (268 aa).

Residue Asp-52 is the Nucleophile of the active site. Residue Tyr-110 participates in substrate binding.

It belongs to the tRNA pseudouridine synthase TruA family. Homodimer.

The enzyme catalyses uridine(38/39/40) in tRNA = pseudouridine(38/39/40) in tRNA. In terms of biological role, formation of pseudouridine at positions 38, 39 and 40 in the anticodon stem and loop of transfer RNAs. This is tRNA pseudouridine synthase A from Prochlorococcus marinus (strain AS9601).